The sequence spans 589 residues: Probable ATP-dependent RNA helicase DDX59 (589 aa).

Disordered regions lie at residues 1-36 and 48-98; these read MFVP…QLEG and KEAV…SKTQ. The span at 12 to 27 shows a compositional bias: basic and acidic residues; that stretch reads NSNDDLKSCEAKKSKP. K26 participates in a covalent cross-link: Glycyl lysine isopeptide (Lys-Gly) (interchain with G-Cter in SUMO2). The residue at position 64 (S64) is a Phosphoserine. Positions 80–91 are enriched in basic and acidic residues; the sequence is GVKDSHPSEEPV. An HIT-type zinc finger spans residues 104 to 133; sequence GEPVCVVCGRYGEYICDKTDEDVCSLECKA. Phosphoserine occurs at positions 156 and 160. The Q motif signature appears at 203-231; that stretch reads IDFEHCGFPETLNQNLKKSGYEVPTPIQM. The 142-residue stretch at 234-375 folds into the Helicase ATP-binding domain; that stretch reads IPVGLLGRDI…DQLLHNPVRI (142 aa). 247–254 is a binding site for ATP; that stretch reads ADTGSGKT. The short motif at 323–326 is the DEAD box element; it reads VKAD. In terms of domain architecture, Helicase C-terminal spans 399 to 549; that stretch reads KKKKLFEILN…ILPPQLLNSP (151 aa).

This sequence belongs to the DEAD box helicase family. DDX59 subfamily. In terms of assembly, interacts (via HIT-type zinc finger) with the RUVBL1/RUVBL2 complex in the presence of ADP.

The protein resides in the cytoplasm. The protein localises to the nucleus. It catalyses the reaction ATP + H2O = ADP + phosphate + H(+). The chain is Probable ATP-dependent RNA helicase DDX59 (Ddx59) from Rattus norvegicus (Rat).